Reading from the N-terminus, the 199-residue chain is Probable adenylyl-sulfate kinase (199 aa).

34–41 (GLSGSGKS) provides a ligand contact to ATP. The Phosphoserine intermediate role is filled by Ser-108.

Belongs to the APS kinase family.

It carries out the reaction adenosine 5'-phosphosulfate + ATP = 3'-phosphoadenylyl sulfate + ADP + H(+). It functions in the pathway sulfur metabolism; hydrogen sulfide biosynthesis; sulfite from sulfate: step 2/3. Its function is as follows. Catalyzes the synthesis of activated sulfate. The sequence is that of Probable adenylyl-sulfate kinase (yisZ) from Bacillus subtilis (strain 168).